The primary structure comprises 232 residues: Large ribosomal subunit protein uL1 (232 aa).

This sequence belongs to the universal ribosomal protein uL1 family. Part of the 50S ribosomal subunit.

Its function is as follows. Binds directly to 23S rRNA. The L1 stalk is quite mobile in the ribosome, and is involved in E site tRNA release. Protein L1 is also a translational repressor protein, it controls the translation of the L11 operon by binding to its mRNA. In Burkholderia cenocepacia (strain ATCC BAA-245 / DSM 16553 / LMG 16656 / NCTC 13227 / J2315 / CF5610) (Burkholderia cepacia (strain J2315)), this protein is Large ribosomal subunit protein uL1.